A 274-amino-acid chain; its full sequence is 4-hydroxy-3-methylbut-2-enyl diphosphate reductase (274 aa).

[4Fe-4S] cluster is bound at residue cysteine 12. Residues histidine 36 and histidine 70 each contribute to the (2E)-4-hydroxy-3-methylbut-2-enyl diphosphate site. Dimethylallyl diphosphate contacts are provided by histidine 36 and histidine 70. Isopentenyl diphosphate contacts are provided by histidine 36 and histidine 70. Cysteine 92 contacts [4Fe-4S] cluster. Histidine 120 lines the (2E)-4-hydroxy-3-methylbut-2-enyl diphosphate pocket. Position 120 (histidine 120) interacts with dimethylallyl diphosphate. Residue histidine 120 coordinates isopentenyl diphosphate. The Proton donor role is filled by glutamate 122. Threonine 158 contacts (2E)-4-hydroxy-3-methylbut-2-enyl diphosphate. Residue cysteine 186 participates in [4Fe-4S] cluster binding. (2E)-4-hydroxy-3-methylbut-2-enyl diphosphate-binding residues include serine 214, serine 215, asparagine 216, and serine 258. Serine 214, serine 215, asparagine 216, and serine 258 together coordinate dimethylallyl diphosphate. Isopentenyl diphosphate-binding residues include serine 214, serine 215, asparagine 216, and serine 258.

Belongs to the IspH family. The cofactor is [4Fe-4S] cluster.

It catalyses the reaction isopentenyl diphosphate + 2 oxidized [2Fe-2S]-[ferredoxin] + H2O = (2E)-4-hydroxy-3-methylbut-2-enyl diphosphate + 2 reduced [2Fe-2S]-[ferredoxin] + 2 H(+). The catalysed reaction is dimethylallyl diphosphate + 2 oxidized [2Fe-2S]-[ferredoxin] + H2O = (2E)-4-hydroxy-3-methylbut-2-enyl diphosphate + 2 reduced [2Fe-2S]-[ferredoxin] + 2 H(+). It participates in isoprenoid biosynthesis; dimethylallyl diphosphate biosynthesis; dimethylallyl diphosphate from (2E)-4-hydroxy-3-methylbutenyl diphosphate: step 1/1. It functions in the pathway isoprenoid biosynthesis; isopentenyl diphosphate biosynthesis via DXP pathway; isopentenyl diphosphate from 1-deoxy-D-xylulose 5-phosphate: step 6/6. Its function is as follows. Catalyzes the conversion of 1-hydroxy-2-methyl-2-(E)-butenyl 4-diphosphate (HMBPP) into a mixture of isopentenyl diphosphate (IPP) and dimethylallyl diphosphate (DMAPP). Acts in the terminal step of the DOXP/MEP pathway for isoprenoid precursor biosynthesis. The chain is 4-hydroxy-3-methylbut-2-enyl diphosphate reductase from Campylobacter curvus (strain 525.92).